The following is a 216-amino-acid chain: Adenylate kinase (216 aa).

Residue 10 to 15 participates in ATP binding; that stretch reads GAGKGT. The segment at 30-59 is NMP; the sequence is STGDIFRANIKEKTPLGIEAKRYIDNGQLV. Residues T31, R36, 57-59, 85-88, and Q92 contribute to the AMP site; these read QLV and GFPR. The segment at 126–163 is LID; sequence GRRVCTSCGASYHIRFNPPKIEGKCDICDNELIQRKDD. R127 contributes to the ATP binding site. Residues C130 and C133 each coordinate Zn(2+). 136–137 serves as a coordination point for ATP; the sequence is SY. Zn(2+) is bound by residues C150 and C153. 2 residues coordinate AMP: R160 and R171. Position 199 (E199) interacts with ATP.

This sequence belongs to the adenylate kinase family. Monomer.

It localises to the cytoplasm. The enzyme catalyses AMP + ATP = 2 ADP. Its pathway is purine metabolism; AMP biosynthesis via salvage pathway; AMP from ADP: step 1/1. Its function is as follows. Catalyzes the reversible transfer of the terminal phosphate group between ATP and AMP. Plays an important role in cellular energy homeostasis and in adenine nucleotide metabolism. The chain is Adenylate kinase from Clostridium botulinum (strain 657 / Type Ba4).